Here is a 454-residue protein sequence, read N- to C-terminus: CCA-adding enzyme (454 aa).

ATP is bound by residues serine 59 and arginine 62. Residues serine 59 and arginine 62 each coordinate CTP. Aspartate 71, aspartate 73, and aspartate 125 together coordinate Mg(2+). Residues histidine 148, lysine 167, and tyrosine 176 each coordinate ATP. CTP is bound by residues histidine 148, lysine 167, and tyrosine 176.

The protein belongs to the tRNA nucleotidyltransferase/poly(A) polymerase family. Archaeal CCA-adding enzyme subfamily. Homodimer. It depends on Mg(2+) as a cofactor.

It catalyses the reaction a tRNA precursor + 2 CTP + ATP = a tRNA with a 3' CCA end + 3 diphosphate. The enzyme catalyses a tRNA with a 3' CCA end + 2 CTP + ATP = a tRNA with a 3' CCACCA end + 3 diphosphate. Catalyzes the addition and repair of the essential 3'-terminal CCA sequence in tRNAs without using a nucleic acid template. Adds these three nucleotides in the order of C, C, and A to the tRNA nucleotide-73, using CTP and ATP as substrates and producing inorganic pyrophosphate. tRNA 3'-terminal CCA addition is required both for tRNA processing and repair. Also involved in tRNA surveillance by mediating tandem CCA addition to generate a CCACCA at the 3' terminus of unstable tRNAs. While stable tRNAs receive only 3'-terminal CCA, unstable tRNAs are marked with CCACCA and rapidly degraded. The chain is CCA-adding enzyme from Methanosarcina mazei (strain ATCC BAA-159 / DSM 3647 / Goe1 / Go1 / JCM 11833 / OCM 88) (Methanosarcina frisia).